Consider the following 318-residue polypeptide: Apo-salmochelin esterase (318 aa).

A helical membrane pass occupies residues 13–32; it reads KAIFFHLSCLTLICSAQVYA. Residues serine 189 and histidine 287 contribute to the active site.

This sequence belongs to the esterase D family. In terms of assembly, monomer.

Its subcellular location is the cell inner membrane. The enzyme catalyses enterobactin + H2O = N-(2,3-dihydroxybenzoyl)-L-serine trimer. The catalysed reaction is monoglucosyl-enterobactin + H2O = [N-(2,3-dihydroxybenzoyl)-L-seryl]2-N-(C-5-[deoxy-beta-D-glucosyl]-2,3-dihydroxybenzoyl)-L-serine + H(+). It catalyses the reaction diglucosyl-enterobactin + H2O = N-(2,3-dihydroxybenzoyl)-L-seryl-[N-(C-5-[deoxy-beta-D-glucosyl]-2,3-dihydroxybenzoyl)-L-serine]2 + H(+). It carries out the reaction triglucosyl-enterobactin + H2O = [N-(C-5-[deoxy-beta-D-glucosyl]-2,3-dihydroxybenzoyl)-L-serine]3 + H(+). In terms of biological role, catalyzes the hydrolysis of both the apo and Fe3(+)-bound forms of enterobactin (Ent), monoglucosyl-C-Ent (MGE), diglucosyl-C-Ent (DGE) and triglucosyl-C-Ent (TGE). It prefers apo siderophores as substrates and hydrolyzes the Fe3(+)-bound siderophores very inefficiently. Tends to hydrolyze the trilactone just once to produce linearized trimers. May hydrolyze and linearize some or all of apo enterobactins while they are being exported. This chain is Apo-salmochelin esterase, found in Escherichia coli O6:H1 (strain CFT073 / ATCC 700928 / UPEC).